Here is a 315-residue protein sequence, read N- to C-terminus: Probable diguanylate cyclase DgcF (315 aa).

4 helical membrane passes run 10 to 30 (FSTGVLIVPCMLTLAIPGVLP), 41 to 61 (IALIVSVIASVVIGGAGSLAF), 80 to 100 (LLTFVTGAVEIVLVANSVIDI), and 116 to 136 (LGIATMAICPIMVSFSVAAIN). In terms of domain architecture, GGDEF spans 173-310 (QHLTVMLLDI…GRNRTSTMRY (138 aa)). The Mg(2+) site is built by Asp-181 and Ile-182. Residues Asn-189, His-194, and Asp-198 each coordinate substrate. A Mg(2+)-binding site is contributed by Glu-224.

As to quaternary structure, homodimer. Requires Mg(2+) as cofactor.

It localises to the cell membrane. The catalysed reaction is 2 GTP = 3',3'-c-di-GMP + 2 diphosphate. It functions in the pathway purine metabolism; 3',5'-cyclic di-GMP biosynthesis. Catalyzes the synthesis of cyclic-di-GMP (c-di-GMP) via the condensation of 2 GTP molecules. This is Probable diguanylate cyclase DgcF from Escherichia coli (strain K12).